The chain runs to 266 residues: Putative carbamate hydrolase RutD (266 aa).

It belongs to the AB hydrolase superfamily. Hydrolase RutD family.

The enzyme catalyses carbamate + 2 H(+) = NH4(+) + CO2. Its function is as follows. Involved in pyrimidine catabolism. May facilitate the hydrolysis of carbamate, a reaction that can also occur spontaneously. This chain is Putative carbamate hydrolase RutD, found in Escherichia coli O103:H2 (strain 12009 / EHEC).